Consider the following 173-residue polypeptide: Cytochrome c-type biogenesis protein CcmE (173 aa).

Residues 1–7 (MTRKSRR) lie on the Cytoplasmic side of the membrane. Residues 8-28 (LILIAACGAVLALALGLILSA) form a helical; Signal-anchor for type II membrane protein membrane-spanning segment. Topologically, residues 29 to 173 (MSGSIVFFRS…DATLGQRSER (145 aa)) are periplasmic. Heme contacts are provided by histidine 122 and tyrosine 126. The segment at 134 to 173 (ALKAQGRWQEGGGKDASKAAPKDAAKPETADATLGQRSER) is disordered. Residues 145–162 (GGKDASKAAPKDAAKPET) show a composition bias toward basic and acidic residues.

It belongs to the CcmE/CycJ family.

It localises to the cell inner membrane. Functionally, heme chaperone required for the biogenesis of c-type cytochromes. Transiently binds heme delivered by CcmC and transfers the heme to apo-cytochromes in a process facilitated by CcmF and CcmH. This Methylorubrum extorquens (strain CM4 / NCIMB 13688) (Methylobacterium extorquens) protein is Cytochrome c-type biogenesis protein CcmE.